The following is a 712-amino-acid chain: Polyribonucleotide nucleotidyltransferase (712 aa).

Mg(2+)-binding residues include Asp488 and Asp494. One can recognise a KH domain in the interval 555–614 (PKIETINIPTDKIREVIGSGGKVIREIVATTGAKVDINDDGVVKVSASDGAKIKAAIDWI). The region spanning 624 to 692 (GKIYDGKVVK…DRGKTKLSMK (69 aa)) is the S1 motif domain.

Belongs to the polyribonucleotide nucleotidyltransferase family. It depends on Mg(2+) as a cofactor.

The protein resides in the cytoplasm. The enzyme catalyses RNA(n+1) + phosphate = RNA(n) + a ribonucleoside 5'-diphosphate. In terms of biological role, involved in mRNA degradation. Catalyzes the phosphorolysis of single-stranded polyribonucleotides processively in the 3'- to 5'-direction. The polypeptide is Polyribonucleotide nucleotidyltransferase (Caulobacter vibrioides (strain NA1000 / CB15N) (Caulobacter crescentus)).